The sequence spans 1238 residues: Multifunctional 2-oxoglutarate metabolism enzyme (1238 aa).

A 2-oxoglutarate dehydrogenase E1, N-terminal part region spans residues 1 to 41 (MANISSPFGQNEWLVEEMYRKFRDDPSSVDPSWHEFLVDYN). The segment at 40-108 (YNPESTQEAT…APAPPPAEGD (69 aa)) is disordered. A linker region spans residues 42 to 94 (PESTQEATEPAVVKPAAAPAKPAPAPAPAKPAAGPPAAGNGSPAAAPSAKPAA). Low complexity-rich tracts occupy residues 51–61 (PAVVKPAAAPA) and 71–98 (KPAA…APAK). Residues 95–343 (APAKAPAPPP…LRTIHQMLLA (249 aa)) are succinyltransferase E2. Histidine 322 acts as the Proton acceptor; for succinyltransferase activity in catalysis. The 2-oxoglutarate dehydrogenase E1, C-terminal part stretch occupies residues 344–1238 (DEFWDEIFRE…QQEILDTAFG (895 aa)). Position 549 (arginine 549) interacts with thiamine diphosphate. 2-oxoglutarate is bound by residues histidine 588 and serine 613. Thiamine diphosphate-binding residues include serine 613, leucine 615, aspartate 656, alanine 657, alanine 658, and asparagine 689. Aspartate 656 is a binding site for Mg(2+). Positions 689 and 691 each coordinate Mg(2+). Positions 794-824 (DISIKEAEDALRDYQGQLEQVFNEVRELEKH) form a coiled coil. Residue histidine 1031 participates in 2-oxoglutarate binding. 7 residues coordinate acetyl-CoA: threonine 1049, arginine 1065, lysine 1100, serine 1103, glutamine 1153, arginine 1160, and arginine 1161.

It belongs to the 2-oxoacid dehydrogenase family. Kgd subfamily. In terms of assembly, homodimer. The 2-oxoglutarate dehydrogenase (ODH) complex contains multiple copies of three enzymatic components: 2-oxoglutarate dehydrogenase (E1), dihydrolipoamide succinyltransferase (E2) and lipoamide dehydrogenase (E3). It depends on Mg(2+) as a cofactor. Requires thiamine diphosphate as cofactor.

The catalysed reaction is glyoxylate + 2-oxoglutarate + H(+) = 2-hydroxy-3-oxoadipate + CO2. The enzyme catalyses 2-oxoglutarate + H(+) = succinate semialdehyde + CO2. It catalyses the reaction N(6)-[(R)-lipoyl]-L-lysyl-[protein] + 2-oxoglutarate + H(+) = N(6)-[(R)-S(8)-succinyldihydrolipoyl]-L-lysyl-[protein] + CO2. It carries out the reaction N(6)-[(R)-dihydrolipoyl]-L-lysyl-[protein] + succinyl-CoA = N(6)-[(R)-S(8)-succinyldihydrolipoyl]-L-lysyl-[protein] + CoA. The protein operates within carbohydrate metabolism; tricarboxylic acid cycle; succinate from 2-oxoglutarate (transferase route): step 1/2. Its pathway is carbohydrate metabolism; tricarboxylic acid cycle; succinyl-CoA from 2-oxoglutarate (dehydrogenase route): step 1/1. With respect to regulation, alpha-ketoglutarate dehydrogenase and decarboxylase activities are inhibited by unphosphorylated GarA, and allosterically activated by acetyl-CoA, the main substrate of the TCA cycle. Shows three enzymatic activities that share a first common step, the attack of thiamine-PP on 2-oxoglutarate (alpha-ketoglutarate, KG), leading to the formation of an enamine-thiamine-PP intermediate upon decarboxylation. Thus, displays KGD activity, catalyzing the decarboxylation from five-carbon 2-oxoglutarate to four-carbon succinate semialdehyde (SSA). Also catalyzes C-C bond formation between the activated aldehyde formed after decarboxylation of alpha-ketoglutarate and the carbonyl of glyoxylate (GLX), to yield 2-hydroxy-3-oxoadipate (HOA), which spontaneously decarboxylates to form 5-hydroxylevulinate (HLA). And is also a component of the 2-oxoglutarate dehydrogenase (ODH) complex, that catalyzes the overall conversion of 2-oxoglutarate to succinyl-CoA and CO(2). The KG decarboxylase and KG dehydrogenase reactions provide two alternative, tightly regulated, pathways connecting the oxidative and reductive branches of the TCA cycle. The sequence is that of Multifunctional 2-oxoglutarate metabolism enzyme (kgd) from Mycobacterium ulcerans (strain Agy99).